The primary structure comprises 39 residues: Photosystem II reaction center protein J (39 aa).

Residues 9-29 (LWLVATVGGIAVITVLGIFIY) form a helical membrane-spanning segment.

The protein belongs to the PsbJ family. In terms of assembly, PSII is composed of 1 copy each of membrane proteins PsbA, PsbB, PsbC, PsbD, PsbE, PsbF, PsbH, PsbI, PsbJ, PsbK, PsbL, PsbM, PsbT, PsbX, PsbY, PsbZ, Psb30/Ycf12, at least 3 peripheral proteins of the oxygen-evolving complex and a large number of cofactors. It forms dimeric complexes.

Its subcellular location is the plastid. The protein resides in the chloroplast thylakoid membrane. In terms of biological role, one of the components of the core complex of photosystem II (PSII). PSII is a light-driven water:plastoquinone oxidoreductase that uses light energy to abstract electrons from H(2)O, generating O(2) and a proton gradient subsequently used for ATP formation. It consists of a core antenna complex that captures photons, and an electron transfer chain that converts photonic excitation into a charge separation. The sequence is that of Photosystem II reaction center protein J from Gracilaria tenuistipitata var. liui (Red alga).